Consider the following 854-residue polypeptide: DNA mismatch repair protein MutS (854 aa).

ATP is bound at residue 615–622 (GPNMGGKS).

This sequence belongs to the DNA mismatch repair MutS family.

Its function is as follows. This protein is involved in the repair of mismatches in DNA. It is possible that it carries out the mismatch recognition step. This protein has a weak ATPase activity. This chain is DNA mismatch repair protein MutS, found in Aliivibrio fischeri (strain ATCC 700601 / ES114) (Vibrio fischeri).